The primary structure comprises 90 residues: Small ribosomal subunit protein uS15c (90 aa).

This sequence belongs to the universal ribosomal protein uS15 family. Part of the 30S ribosomal subunit.

It localises to the plastid. It is found in the chloroplast. The chain is Small ribosomal subunit protein uS15c (rps15) from Piper cenocladum (Ant piper).